The sequence spans 994 residues: MKAVRSDKTTQAATTAQAQKPAKAGSSKIKIVTAAPQAANASARQPASAQAPAPKANGRTREDKDHPLFQDIRYLGRLLGDVLREQEGDAVFDVVETIRQTAVRFRREDDSAAAQTLDKKLRSLSPEQTVSVVRAFSYFSHLANIAEDRHRNRRHRIHELAGSTSQPGTIAHSLERLVEAGAAATPVLQEFFNNALIVPVLTAHPTEVQRKSILDAQHDVARLLAERDQQLTDRERAHNEAMLRARVTSLWQTRMLRDSRLSVADEIENALSYYRATFLEEIPALYADIEEALAEHGLEARLPPFFQMGSWIGGDRDGNPNVTAETLENAITRQAAVIFEHYMEQVHKLGAELSVSNLLAGASDALKELAAVSPDQSPHRTDEPYRRALIGMYTRLAASARVRLGEGSVPVRSAGRGAAPVRAKPYADSAEFVRDLHVLIDSLAEHHGAPLAAPRLSPLARAAEVFGFHLASIDLRQSSDVHEAVITELLRRAGVEENYAELPEADKLNVLLSELAQPRPLRLPFAEYSDLVKSELGVLEEARVTREKFGARAVRNYIISHTETVSDLVEVMLLQKETGLLRGCLGNANDPAQAGLMVIPLFETIPDLRNAPHIMRDLIALPGVDALIEHQGNEQEVMLGYSDSNKDGGFLTSNWELYRAELALVSLFNERGVTLRLFHGRGGTVGRGGGPTYQAILSQPPGTVDGQIRLTEQGEVIASKFGNPEIGRRNLETVVAATLEASLLPHGIAPAQLPAFEETMQQLSDAAMASYRALVYETPGFKEYFFESTPISEIAELNIGSRPASRKLQDPKQRKIEDLRAIPWGFSWGQCRLLLTGWYGFGSAVAAHLDSAPSDAERTRRLALLKKMHKTWPFFANLLSNMDMVLAKTDLAVASRYAALVSDKKLRKHVFERIVAEWERTSKVLSEITGKSERLAENPLLARSIKNRFPYLDPLNHLQVELLKRHRAGDTNARVRRGIHLSINGIAAGLRNTG.

Residues 1–67 form a disordered region; it reads MKAVRSDKTT…GRTREDKDHP (67 aa). Composition is skewed to low complexity over residues 9–24 and 34–57; these read TTQA…PAKA and AAPQ…PKAN. Residues His204 and Lys646 contribute to the active site.

The protein belongs to the PEPCase type 1 family. Mg(2+) serves as cofactor.

It carries out the reaction oxaloacetate + phosphate = phosphoenolpyruvate + hydrogencarbonate. Its function is as follows. Forms oxaloacetate, a four-carbon dicarboxylic acid source for the tricarboxylic acid cycle. The protein is Phosphoenolpyruvate carboxylase of Paraburkholderia xenovorans (strain LB400).